We begin with the raw amino-acid sequence, 612 residues long: Chaperone protein DnaK (612 aa).

A Phosphothreonine; by autocatalysis modification is found at threonine 174. The tract at residues 578–612 is disordered; the sequence is GGQTGGATNTDSAGQGTTQDNVYEANYKVEDDDNK. A compositionally biased stretch (polar residues) spans 586–598; it reads NTDSAGQGTTQDN.

The protein belongs to the heat shock protein 70 family.

Acts as a chaperone. The chain is Chaperone protein DnaK from Thermoanaerobacter sp. (strain X514).